Reading from the N-terminus, the 150-residue chain is Large ribosomal subunit protein bL9 (150 aa).

This sequence belongs to the bacterial ribosomal protein bL9 family.

Binds to the 23S rRNA. This is Large ribosomal subunit protein bL9 from Vesicomyosocius okutanii subsp. Calyptogena okutanii (strain HA).